The sequence spans 336 residues: Dihydroorotate dehydrogenase (quinone) (336 aa).

Residues alanine 62 to lysine 66 and threonine 86 contribute to the FMN site. Lysine 66 serves as a coordination point for substrate. Asparagine 111–phenylalanine 115 contributes to the substrate binding site. FMN contacts are provided by asparagine 139 and asparagine 172. Position 172 (asparagine 172) interacts with substrate. Residue serine 175 is the Nucleophile of the active site. A substrate-binding site is contributed by asparagine 177. FMN-binding residues include lysine 217 and threonine 245. Asparagine 246–threonine 247 serves as a coordination point for substrate. Residues glycine 268, glycine 297, and tyrosine 318–serine 319 each bind FMN.

This sequence belongs to the dihydroorotate dehydrogenase family. Type 2 subfamily. As to quaternary structure, monomer. The cofactor is FMN.

It localises to the cell membrane. It carries out the reaction (S)-dihydroorotate + a quinone = orotate + a quinol. Its pathway is pyrimidine metabolism; UMP biosynthesis via de novo pathway; orotate from (S)-dihydroorotate (quinone route): step 1/1. Catalyzes the conversion of dihydroorotate to orotate with quinone as electron acceptor. This Buchnera aphidicola subsp. Schizaphis graminum (strain Sg) protein is Dihydroorotate dehydrogenase (quinone).